The primary structure comprises 36 residues: Photosystem I reaction center subunit VIII (36 aa).

The chain crosses the membrane as a helical span at residues 7 to 29; sequence PSILVPLVGILLPAVTMASLFLY.

Belongs to the PsaI family.

It localises to the plastid. It is found in the chloroplast thylakoid membrane. In terms of biological role, may help in the organization of the PsaL subunit. The protein is Photosystem I reaction center subunit VIII of Adiantum capillus-veneris (Maidenhair fern).